Consider the following 239-residue polypeptide: MSSLPQEAALPITNTLFPPPPPYFQAFTDEAIERYETLTGKSLFVNDEKGKTKGKEKKSDDRDMSVDIRIQDLTEEEQNEKLELEGKLEKPRADWVNEDGRWMCFGTMYTTEPIIPTAQSIGLPPFIDPAVEPQESLPPLLHSFLHTLLLLLDTLTMTARTPNELAAAGWASEGDQYIQHLTNLSANMMVASNQLRSAQSEATLVLLMEKELEERRKQTEKLRSKCKEIASGIRALKGL.

2 disordered regions span residues 1 to 21 (MSSL…PPPP) and 43 to 66 (LFVN…DMSV). Residues 46-66 (NDEKGKTKGKEKKSDDRDMSV) show a composition bias toward basic and acidic residues.

It belongs to the Mediator complex subunit 7 family. As to quaternary structure, component of the Mediator complex.

The protein localises to the nucleus. Functionally, component of the Mediator complex, a coactivator involved in the regulated transcription of nearly all RNA polymerase II-dependent genes. Mediator functions as a bridge to convey information from gene-specific regulatory proteins to the basal RNA polymerase II transcription machinery. Mediator is recruited to promoters by direct interactions with regulatory proteins and serves as a scaffold for the assembly of a functional preinitiation complex with RNA polymerase II and the general transcription factors. The protein is Mediator of RNA polymerase II transcription subunit 7 (MED7) of Cryptococcus neoformans var. neoformans serotype D (strain B-3501A) (Filobasidiella neoformans).